Consider the following 379-residue polypeptide: MVSLYLENGLFLQVQSFGASGTQVGELVFNTSMSGYQEVISDPSYKGQFVIFSMPEIGVVGANSKDDESFFSSAGILVRHYNEFFSNSRADFSLSAYLKERGVLGICGVDTRSLIKTLRHHGCLMMVASTIEHDKNKLEEILKNAPRISHTPLVASVSTPKIITHQRATFDFKTLDYKPFDEKNSHKTIAVLDFGAKGNILNELQNVGLKALIYPHHTKANELIKAYEKKEIHGIFLSNGPGDPLSLQQEIGEIKQLIGAKIPMFGICLGHQLLSIAQGYPTYKLKFGHHGSNHPVKNLETNAVEITAQNHNYCVPEAIEKIATITHRNLFDNTIEGVHYKNAPIISVQHHPESSPGPKESHYIFKEFVKLLENFPTRE.

The segment at 1-184 (MVSLYLENGL…LDYKPFDEKN (184 aa)) is CPSase. 3 residues coordinate L-glutamine: serine 44, glycine 240, and glycine 242. The 191-residue stretch at 188 to 378 (TIAVLDFGAK…VKLLENFPTR (191 aa)) folds into the Glutamine amidotransferase type-1 domain. The active-site Nucleophile is cysteine 268. Positions 269, 272, 310, and 313 each coordinate L-glutamine. Catalysis depends on residues histidine 351 and glutamate 353.

Belongs to the CarA family. In terms of assembly, composed of two chains; the small (or glutamine) chain promotes the hydrolysis of glutamine to ammonia, which is used by the large (or ammonia) chain to synthesize carbamoyl phosphate. Tetramer of heterodimers (alpha,beta)4.

The catalysed reaction is hydrogencarbonate + L-glutamine + 2 ATP + H2O = carbamoyl phosphate + L-glutamate + 2 ADP + phosphate + 2 H(+). It carries out the reaction L-glutamine + H2O = L-glutamate + NH4(+). It participates in amino-acid biosynthesis; L-arginine biosynthesis; carbamoyl phosphate from bicarbonate: step 1/1. Its pathway is pyrimidine metabolism; UMP biosynthesis via de novo pathway; (S)-dihydroorotate from bicarbonate: step 1/3. In terms of biological role, small subunit of the glutamine-dependent carbamoyl phosphate synthetase (CPSase). CPSase catalyzes the formation of carbamoyl phosphate from the ammonia moiety of glutamine, carbonate, and phosphate donated by ATP, constituting the first step of 2 biosynthetic pathways, one leading to arginine and/or urea and the other to pyrimidine nucleotides. The small subunit (glutamine amidotransferase) binds and cleaves glutamine to supply the large subunit with the substrate ammonia. In Helicobacter acinonychis (strain Sheeba), this protein is Carbamoyl phosphate synthase small chain.